The chain runs to 156 residues: 6,7-dimethyl-8-ribityllumazine synthase (156 aa).

5-amino-6-(D-ribitylamino)uracil contacts are provided by residues phenylalanine 28, 62-64 (ALE), and 86-88 (AVI). (2S)-2-hydroxy-3-oxobutyl phosphate is bound at residue 91-92 (ET). Histidine 94 functions as the Proton donor in the catalytic mechanism. 5-amino-6-(D-ribitylamino)uracil is bound at residue asparagine 119. A (2S)-2-hydroxy-3-oxobutyl phosphate-binding site is contributed by arginine 133.

This sequence belongs to the DMRL synthase family.

It catalyses the reaction (2S)-2-hydroxy-3-oxobutyl phosphate + 5-amino-6-(D-ribitylamino)uracil = 6,7-dimethyl-8-(1-D-ribityl)lumazine + phosphate + 2 H2O + H(+). Its pathway is cofactor biosynthesis; riboflavin biosynthesis; riboflavin from 2-hydroxy-3-oxobutyl phosphate and 5-amino-6-(D-ribitylamino)uracil: step 1/2. Catalyzes the formation of 6,7-dimethyl-8-ribityllumazine by condensation of 5-amino-6-(D-ribitylamino)uracil with 3,4-dihydroxy-2-butanone 4-phosphate. This is the penultimate step in the biosynthesis of riboflavin. The protein is 6,7-dimethyl-8-ribityllumazine synthase of Azoarcus sp. (strain BH72).